Consider the following 502-residue polypeptide: Probable cytosol aminopeptidase (502 aa).

2 residues coordinate Mn(2+): Lys269 and Asp274. Lys281 is a catalytic residue. Positions 292, 351, and 353 each coordinate Mn(2+). Residue Arg355 is part of the active site.

This sequence belongs to the peptidase M17 family. Requires Mn(2+) as cofactor.

The protein resides in the cytoplasm. It carries out the reaction Release of an N-terminal amino acid, Xaa-|-Yaa-, in which Xaa is preferably Leu, but may be other amino acids including Pro although not Arg or Lys, and Yaa may be Pro. Amino acid amides and methyl esters are also readily hydrolyzed, but rates on arylamides are exceedingly low.. The enzyme catalyses Release of an N-terminal amino acid, preferentially leucine, but not glutamic or aspartic acids.. Functionally, presumably involved in the processing and regular turnover of intracellular proteins. Catalyzes the removal of unsubstituted N-terminal amino acids from various peptides. The sequence is that of Probable cytosol aminopeptidase from Vibrio campbellii (strain ATCC BAA-1116).